Here is an 85-residue protein sequence, read N- to C-terminus: Kappa-theraphotoxin-Cg1d (85 aa).

Positions 1-21 (MKVSVLITLAVLGVMFVWASA) are cleaved as a signal peptide. Residues 22–51 (AELEERGSDQRDSPAWLKSMERIFQSEERE) constitute a propeptide that is removed on maturation. Intrachain disulfides connect cysteine 52–cysteine 66, cysteine 59–cysteine 71, and cysteine 65–cysteine 78.

The protein belongs to the neurotoxin 10 (Hwtx-1) family. 28 (Jztx-11) subfamily. As to expression, expressed by the venom gland.

It localises to the secreted. Functionally, probable ion channel inhibitor. The chain is Kappa-theraphotoxin-Cg1d from Chilobrachys guangxiensis (Chinese earth tiger tarantula).